A 78-amino-acid chain; its full sequence is Apolipoprotein C-I (78 aa).

Positions 1 to 26 (MRLILCLPVLVVVLLMVLEGPAPAQG) are cleaved as a signal peptide.

It belongs to the apolipoprotein C1 family.

The protein localises to the secreted. Its function is as follows. Inhibitor of lipoprotein binding to the low density lipoprotein (LDL) receptor, LDL receptor-related protein, and very low density lipoprotein (VLDL) receptor. Associates with high density lipoproteins (HDL) and the triacylglycerol-rich lipoproteins in the plasma and makes up about 10% of the protein of the VLDL and 2% of that of HDL. Appears to interfere directly with fatty acid uptake and is also the major plasma inhibitor of cholesteryl ester transfer protein (CETP). Binds free fatty acids and reduces their intracellular esterification. Modulates the interaction of APOE with beta-migrating VLDL and inhibits binding of beta-VLDL to the LDL receptor-related protein. This chain is Apolipoprotein C-I (APOC1), found in Acinonyx jubatus (Cheetah).